The primary structure comprises 62 residues: Probable tautomerase RSc0807 (62 aa).

The Proton acceptor; via imino nitrogen role is filled by P2.

Belongs to the 4-oxalocrotonate tautomerase family.

In Ralstonia nicotianae (strain ATCC BAA-1114 / GMI1000) (Ralstonia solanacearum), this protein is Probable tautomerase RSc0807.